The following is a 447-amino-acid chain: MNNIIPTEETHPLTWRLRNDRETVWIEEYCKKNGYFSLKKALKTMCPEDVVHLIKESGLKGRGGAGFSTGLKWSLMSKDNSSKIRYLLCNADEMEPGTYKDRFLMENIPHQLIEGMLLSAFALNVSRGYIFLRGEYIKAEYILKKSIQEAINFGFIGSNILNSGFNFELFLHTGAGRYICGEETALINSLEGRRANPRAKPPFPAVFGLWGKPTCVNNVETLSNVPSIVLHGVNWYKKLSKSTDTTGTKLMGFSGKVNNPGVWELPFGTTAREILEDYARGMKSGLFLKSWQPGGAGTDFLIEKHLDLPMDFTSIAKAGSRLGTAIAMAVDNKTNMISLVCNIEKFFSRESCGLCTPCREGLPWIVKILESLEKKEGHKNDVKNLERLCLDLSPGKTFCAHAPGAVEPLQSAIKYFRLEFEAGISIKKLKKCSNILGIQSNEFTSKV.

61–70 (GRGGAGFSTG) lines the NAD(+) pocket. 174–221 (GAGRYICGEETALINSLEGRRANPRAKPPFPAVFGLWGKPTCVNNVET) is a binding site for FMN. Residues cysteine 352, cysteine 355, cysteine 358, and cysteine 399 each contribute to the [4Fe-4S] cluster site.

The protein belongs to the complex I 51 kDa subunit family. In terms of assembly, composed of 13 different subunits. Subunits NuoCD, E, F, and G constitute the peripheral sector of the complex. Requires [4Fe-4S] cluster as cofactor. FMN serves as cofactor.

The enzyme catalyses a quinone + NADH + 5 H(+)(in) = a quinol + NAD(+) + 4 H(+)(out). NDH-1 shuttles electrons from NADH, via FMN and iron-sulfur (Fe-S) centers, to quinones in the respiratory chain. Couples the redox reaction to proton translocation (for every two electrons transferred, four hydrogen ions are translocated across the cytoplasmic membrane), and thus conserves the redox energy in a proton gradient. The polypeptide is NADH-quinone oxidoreductase subunit F (nuoF) (Buchnera aphidicola subsp. Schizaphis graminum (strain Sg)).